A 385-amino-acid chain; its full sequence is NADH-ubiquinone oxidoreductase chain 2 (385 aa).

Transmembrane regions (helical) follow at residues 12–32, 34–50, 66–86, 112–132, 161–181, 200–220, 227–247, 268–288, 291–311, and 354–374; these read PVLV…SNWL, VYLA…ILVA, FVLG…LCGL, VITP…LSAA, VFSI…ATIF, LAYS…IGTF, LIYM…VLAL, AITL…IGFF, WWIL…LAVI, and LLIG…NLLL.

Belongs to the complex I subunit 2 family.

It localises to the mitochondrion inner membrane. The enzyme catalyses a ubiquinone + NADH + 5 H(+)(in) = a ubiquinol + NAD(+) + 4 H(+)(out). In terms of biological role, core subunit of the mitochondrial membrane respiratory chain NADH dehydrogenase (Complex I) that is believed to belong to the minimal assembly required for catalysis. Complex I functions in the transfer of electrons from NADH to the respiratory chain. The immediate electron acceptor for the enzyme is believed to be ubiquinone. This is NADH-ubiquinone oxidoreductase chain 2 (ND2) from Metridium senile (Brown sea anemone).